Reading from the N-terminus, the 391-residue chain is Acetate kinase (391 aa).

N7 contacts Mg(2+). K14 provides a ligand contact to ATP. Position 88 (R88) interacts with substrate. D145 acts as the Proton donor/acceptor in catalysis. ATP is bound by residues 203-207 (HAGNG), 278-280 (DAR), and 326-330 (GMGEN). A Mg(2+)-binding site is contributed by E378.

Belongs to the acetokinase family. In terms of assembly, homodimer. Requires Mg(2+) as cofactor. The cofactor is Mn(2+).

The protein resides in the cytoplasm. It carries out the reaction acetate + ATP = acetyl phosphate + ADP. Its pathway is metabolic intermediate biosynthesis; acetyl-CoA biosynthesis; acetyl-CoA from acetate: step 1/2. In terms of biological role, catalyzes the formation of acetyl phosphate from acetate and ATP. Can also catalyze the reverse reaction. In Phytoplasma mali (strain AT), this protein is Acetate kinase.